We begin with the raw amino-acid sequence, 100 residues long: Large ribosomal subunit protein uL23 (100 aa).

It belongs to the universal ribosomal protein uL23 family. Part of the 50S ribosomal subunit. Contacts protein L29, and trigger factor when it is bound to the ribosome.

One of the early assembly proteins it binds 23S rRNA. One of the proteins that surrounds the polypeptide exit tunnel on the outside of the ribosome. Forms the main docking site for trigger factor binding to the ribosome. This is Large ribosomal subunit protein uL23 from Parasynechococcus marenigrum (strain WH8102).